Consider the following 114-residue polypeptide: Large ribosomal subunit protein uL22 (114 aa).

Belongs to the universal ribosomal protein uL22 family. In terms of assembly, part of the 50S ribosomal subunit.

Its function is as follows. This protein binds specifically to 23S rRNA; its binding is stimulated by other ribosomal proteins, e.g. L4, L17, and L20. It is important during the early stages of 50S assembly. It makes multiple contacts with different domains of the 23S rRNA in the assembled 50S subunit and ribosome. The globular domain of the protein is located near the polypeptide exit tunnel on the outside of the subunit, while an extended beta-hairpin is found that lines the wall of the exit tunnel in the center of the 70S ribosome. This Myxococcus xanthus (strain DK1622) protein is Large ribosomal subunit protein uL22.